The primary structure comprises 239 residues: MKTNILVKRMAVIGLAVAAACTGAAAAAQGAVPQAQRIIRVLSVAGGDAASPQAAVWKKAPTTQVTLLTAFPGHISIVGTAATQKLAAQAVRASGRLFVRLAWSDRTANTVMKDTDQFLDGAAVEFPVNGKVATLPFMGDPVNVVNVWHWRADGRTLNLLAKGFGTSTPVPTEDLRSASVRTGDGWEVVLSRPLRVKAEEGANLQGRRTMPIGFAAWDGENQERDGLKAVTMEWWQLRF.

Positions 1–27 (MKTNILVKRMAVIGLAVAAACTGAAAA) are cleaved as a signal peptide. Heme b contacts are provided by histidine 74 and methionine 138.

As to quaternary structure, heterotrimer of alpha, beta and gamma subunits. Heme b is required as a cofactor.

The protein resides in the periplasm. In terms of biological role, may transfer electrons to the iron-sulfur centers of ClrB. The chain is Chlorate reductase subunit gamma (clrC) from Ideonella dechloratans.